A 210-amino-acid chain; its full sequence is Na(+)-translocating NADH-quinone reductase subunit D (210 aa).

Transmembrane regions (helical) follow at residues 9–29 (AVLF…LGIC), 42–62 (LIMS…ISTI), 72–92 (IIVQ…VLQA), 96–116 (ATAK…IVMG), 131–151 (FLDG…VGFI), and 178–198 (MGLL…IWVL).

It belongs to the NqrDE/RnfAE family. As to quaternary structure, composed of six subunits; NqrA, NqrB, NqrC, NqrD, NqrE and NqrF.

It is found in the cell inner membrane. The enzyme catalyses a ubiquinone + n Na(+)(in) + NADH + H(+) = a ubiquinol + n Na(+)(out) + NAD(+). In terms of biological role, NQR complex catalyzes the reduction of ubiquinone-1 to ubiquinol by two successive reactions, coupled with the transport of Na(+) ions from the cytoplasm to the periplasm. NqrA to NqrE are probably involved in the second step, the conversion of ubisemiquinone to ubiquinol. The polypeptide is Na(+)-translocating NADH-quinone reductase subunit D (Pseudoalteromonas translucida (strain TAC 125)).